The primary structure comprises 347 residues: NADH-quinone oxidoreductase subunit H (347 aa).

Helical transmembrane passes span 25 to 45, 95 to 115, 128 to 148, 168 to 188, 200 to 220, 251 to 271, 284 to 304, and 324 to 344; these read ILFM…VAAM, FMFT…FAII, IGIL…LFGG, ISYE…TGSF, GWYI…GVAV, FFIG…CLFF, FIPP…MFVL, and VCLP…LIFS.

This sequence belongs to the complex I subunit 1 family. As to quaternary structure, NDH-1 is composed of 14 different subunits. Subunits NuoA, H, J, K, L, M, N constitute the membrane sector of the complex.

It localises to the cell inner membrane. The catalysed reaction is a quinone + NADH + 5 H(+)(in) = a quinol + NAD(+) + 4 H(+)(out). Functionally, NDH-1 shuttles electrons from NADH, via FMN and iron-sulfur (Fe-S) centers, to quinones in the respiratory chain. The immediate electron acceptor for the enzyme in this species is believed to be ubiquinone. Couples the redox reaction to proton translocation (for every two electrons transferred, four hydrogen ions are translocated across the cytoplasmic membrane), and thus conserves the redox energy in a proton gradient. This subunit may bind ubiquinone. This is NADH-quinone oxidoreductase subunit H from Psychrobacter cryohalolentis (strain ATCC BAA-1226 / DSM 17306 / VKM B-2378 / K5).